The chain runs to 475 residues: Sulfate adenylyltransferase subunit 1 (475 aa).

A tr-type G domain is found at 25 to 239 (KSLLRFLTCG…EVLETVEIQR (215 aa)). Residues 34–41 (GSVDDGKS) are G1. 34 to 41 (GSVDDGKS) contributes to the GTP binding site. The tract at residues 92 to 96 (GITID) is G2. The segment at 113 to 116 (DTPG) is G3. GTP contacts are provided by residues 113 to 117 (DTPGH) and 168 to 171 (NKMD). The G4 stretch occupies residues 168 to 171 (NKMD). Residues 206–208 (SAL) form a G5 region.

This sequence belongs to the TRAFAC class translation factor GTPase superfamily. Classic translation factor GTPase family. CysN/NodQ subfamily. In terms of assembly, heterodimer composed of CysD, the smaller subunit, and CysN.

It catalyses the reaction sulfate + ATP + H(+) = adenosine 5'-phosphosulfate + diphosphate. Its pathway is sulfur metabolism; hydrogen sulfide biosynthesis; sulfite from sulfate: step 1/3. With CysD forms the ATP sulfurylase (ATPS) that catalyzes the adenylation of sulfate producing adenosine 5'-phosphosulfate (APS) and diphosphate, the first enzymatic step in sulfur assimilation pathway. APS synthesis involves the formation of a high-energy phosphoric-sulfuric acid anhydride bond driven by GTP hydrolysis by CysN coupled to ATP hydrolysis by CysD. The chain is Sulfate adenylyltransferase subunit 1 from Escherichia coli (strain ATCC 8739 / DSM 1576 / NBRC 3972 / NCIMB 8545 / WDCM 00012 / Crooks).